The following is a 333-amino-acid chain: Ribosome biogenesis regulatory protein homolog (333 aa).

Disordered stretches follow at residues 227-248 and 271-333; these read KANV…VSGE and AAAV…ARKG. Positions 278 to 295 are enriched in basic and acidic residues; sequence LREKKEKSERKGAKDQTR. Positions 324–333 are enriched in basic residues; it reads GANKAKARKG.

It belongs to the RRS1 family.

The protein localises to the nucleus. Its subcellular location is the nucleolus. Functionally, involved in ribosomal large subunit assembly. This Caenorhabditis elegans protein is Ribosome biogenesis regulatory protein homolog.